Reading from the N-terminus, the 101-residue chain is Olivetolic acid cyclase (101 aa).

One can recognise a Stress-response A/B barrel domain in the interval 3 to 97 (VKHLIVLKFK…FWEKLLIFDY (95 aa)). A 3,5,7-trioxododecanoyl-CoA-binding site is contributed by His5. Mg(2+)-binding residues include Val31, Ile34, and Met37. Tyr72 lines the 3,5,7-trioxododecanoyl-CoA pocket. Catalysis depends on acid/base catalyst residues Tyr72 and His75.

In terms of assembly, homodimer. In terms of tissue distribution, expressed in glandular trichomes and at lower levels in female flowers.

It localises to the cytoplasm. The enzyme catalyses 3,5,7-trioxododecanoyl-CoA = olivetolate + CoA + H(+). Its pathway is secondary metabolite biosynthesis; terpenoid biosynthesis. Involved in the biosynthesis of cannabinoids-related terpenophenolic natural products, which have pharmacological activity. Polyketide cyclase which functions in concert with OLS/TKS to form olivetolic acid. Has no intrinsic polyketide synthase activity and requires the presence of OLS to produce olivetolic acid. The chain is Olivetolic acid cyclase from Cannabis sativa (Hemp).